A 237-amino-acid chain; its full sequence is MLGVSLGARLLRGVGGRRGQFGARGVSEGSAAMAAGESMAQRMVWVDLEMTGLDIEKDQIIEMACLITDSDLNILAEGPNLIIKQPDELLDSMSDWCKEHHGKSGLTKAVKESTVTLQQAEYEFLSFVRQQTPPGLCPLAGNSVHADKKFLDKHMPQFMKHLHYRIIDVSTVKELCRRWYPEDYEFAPKKAASHRALDDISESIKELQFYRNNIFKKKTDEKKRKIIENGETEKPVS.

Residues 1–25 constitute a mitochondrion transit peptide; sequence MLGVSLGARLLRGVGGRRGQFGARG. The Exonuclease domain maps to 43-207; that stretch reads MVWVDLEMTG…DDISESIKEL (165 aa). 2 residues coordinate Mg(2+): Asp-47 and Glu-49. Residue Ser-92 is modified to Phosphoserine. The residue at position 122 (Tyr-122) is a Phosphotyrosine. Asp-147 contacts Mg(2+). Position 173 is an N6-acetyllysine (Lys-173). The active site involves His-194. Asp-199 lines the Mg(2+) pocket.

The protein belongs to the oligoribonuclease family. As to quaternary structure, homodimer. Homotetramer. It depends on Mn(2+) as a cofactor. The cofactor is Mg(2+).

It is found in the mitochondrion intermembrane space. Its subcellular location is the mitochondrion matrix. It localises to the mitochondrion. The protein resides in the cytoplasm. The protein localises to the nucleus. 3'-to-5'exoribonuclease that preferentially degrades DNA and RNA oligonucleotides composed of only two nucleotides. Binds and degrades longer oligonucleotides with a lower affinity. Plays dual roles in mitochondria, scavenging nanoRNAs (small RNA oligonucleotides of &lt;5 nucleotides) that are produced by the degradosome and clearing short RNAs that are generated by RNA processing. Essential for correct initiation of mitochondrial transcription, degrading mitochondrial RNA dinucleotides to prevent RNA-primed transcription at non-canonical sites in the mitochondrial genome. Essential for embryonic development. This is Oligoribonuclease, mitochondrial (Rexo2) from Mus musculus (Mouse).